Reading from the N-terminus, the 205-residue chain is MKSKNNKFIAVSISFILGIALGIYVESTYYFTNIINSKSFSLSNAQINYYSISELSRSNVSTCFTPPAGCTKFIVQQIEKAEESIYMQAYGMSDSLITTALINAQMRGVKVRILLDRSNLKQKFSKLYELQQAKIDVGIDTVPGIAHNKVIIIDKKKVITGSFNFTVSADKRNAENVILIEDRKLAESYLQNWFSRKTTSNAVHF.

The signal sequence occupies residues 1-22 (MKSKNNKFIAVSISFILGIALG). One can recognise a PLD phosphodiesterase domain in the interval 142–169 (VPGIAHNKVIIIDKKKVITGSFNFTVSA). Residues histidine 147, lysine 149, and aspartate 154 contribute to the active site.

The protein belongs to the phospholipase D family. As to quaternary structure, homodimer.

It localises to the secreted. The catalysed reaction is a 1,2-diacyl-sn-glycero-3-phosphocholine + H2O = a 1,2-diacyl-sn-glycero-3-phosphate + choline + H(+). Functionally, could be a virulence factor. This is Phospholipase D (pld) from Rickettsia prowazekii (strain Madrid E).